Reading from the N-terminus, the 103-residue chain is MEYTSNWIFSNGLCLGIRGRKSLKPQHIYRSIFYSNFILLSSLLIGGLLITIACYHICQCLFNNSMIYYYLYHRAPPYIYHCKRRAKFFTFFFFATQRDLKRT.

The chain crosses the membrane as a helical span at residues 37–57 (FILLSSLLIGGLLITIACYHI).

Its subcellular location is the membrane. This is an uncharacterized protein from Saccharomyces cerevisiae (strain ATCC 204508 / S288c) (Baker's yeast).